Consider the following 141-residue polypeptide: Large ribosomal subunit protein uL11 (141 aa).

Belongs to the universal ribosomal protein uL11 family. In terms of assembly, part of the ribosomal stalk of the 50S ribosomal subunit. Interacts with L10 and the large rRNA to form the base of the stalk. L10 forms an elongated spine to which L12 dimers bind in a sequential fashion forming a multimeric L10(L12)X complex. In terms of processing, one or more lysine residues are methylated.

Its function is as follows. Forms part of the ribosomal stalk which helps the ribosome interact with GTP-bound translation factors. This is Large ribosomal subunit protein uL11 from Coprothermobacter proteolyticus (strain ATCC 35245 / DSM 5265 / OCM 4 / BT).